Here is a 249-residue protein sequence, read N- to C-terminus: ATP synthase subunit a, chloroplastic (249 aa).

The next 5 helical transmembrane spans lie at 40-60, 97-117, 136-156, 201-221, and 222-242; these read QVLI…VLAI, VPFI…GALL, INTT…AGLS, LVVV…VMFL, and GLFT…AYIG.

The protein belongs to the ATPase A chain family. As to quaternary structure, F-type ATPases have 2 components, CF(1) - the catalytic core - and CF(0) - the membrane proton channel. CF(1) has five subunits: alpha(3), beta(3), gamma(1), delta(1), epsilon(1). CF(0) has four main subunits: a, b, b' and c.

It is found in the plastid. It localises to the chloroplast thylakoid membrane. Functionally, key component of the proton channel; it plays a direct role in the translocation of protons across the membrane. The protein is ATP synthase subunit a, chloroplastic of Capsella bursa-pastoris (Shepherd's purse).